The following is a 522-amino-acid chain: Subtilisin-like protease 10 (522 aa).

Residues Met-1 to Ala-19 form the signal peptide. Positions Ala-20 to Gln-117 are excised as a propeptide. One can recognise an Inhibitor I9 domain in the interval Ser-36–Ile-113. The Peptidase S8 domain occupies Asn-127–Thr-405. Catalysis depends on charge relay system residues Asp-159 and His-190. Asn-251 is a glycosylation site (N-linked (GlcNAc...) asparagine). Ser-348 (charge relay system) is an active-site residue. Residues Ser-383–Leu-397 show a composition bias toward polar residues. The interval Ser-383–Arg-515 is disordered. N-linked (GlcNAc...) asparagine glycosylation is found at Asn-392 and Asn-403. Over residues Ser-432–Asn-459 the composition is skewed to pro residues.

The protein belongs to the peptidase S8 family.

The protein resides in the secreted. In terms of biological role, secreted subtilisin-like serine protease with keratinolytic activity that contributes to pathogenicity. The protein is Subtilisin-like protease 10 (SUB10) of Trichophyton verrucosum (strain HKI 0517).